We begin with the raw amino-acid sequence, 885 residues long: MGCAPSIHVSQSGVIYCRDSDESSSPRQTTSVSQGPAAPLPGLFVQTDAADAIPPSRASGPPSVARVRRARTELGSGSSAGSAAPAATTSRGRRRHCCSSAEAETQTCYTSVKQVSSAEVRIGPMRLTQDPIQVLLIFAKEDSQSDGFWWACDRAGYRCNIARTPESALECFLDKHHEIIVIDHRQTQNFDAEAVCRSIRATNPSEHTVILAVVSRVSDDHEEASVLPLLHAGFNRRFMENSSIIACYNELIQIEHGEVRSQFKLRACNSVFTALDHCHEAIEITSDDHVIQYVNPAFERMMGYHKGELLGKELADLPKSDKNRADLLDTINTCIKKGKEWQGVYYARRKSGDSIQQHVKITPVIGQGGKIRHFVSLKKLCCTTDNNKQIHKIHRDSGDNSQTEPHSFRYKNRRKESIDVKSISSRGSDAPSLQNRRYPSMARIHSMTIEAPITKVINIINAAQENSPVTVAEALDRVLEILRTTELYSPQLGTKDEDPHTSDLVGGLMTDGLRRLSGNEYVFTKNVHQSHSHLAMPITINDVPPCISQLLDNEESWDFNIFELEAITHKRPLVYLGLKVFSRFGVCEFLNCSETTLRAWFQVIEANYHSSNAYHNSTHAADVLHATAFFLGKERVKGSLDQLDEVAALIAATVHDVDHPGRTNSFLCNAGSELAVLYNDTAVLESHHTALAFQLTVKDTKCNIFKNIDRNHYRTLRQAIIDMVLATEMTKHFEHVNKFVNSINKPMAAEIEGSDCECNPAGKNFPENQILIKRMMIKCADVANPCRPLDLCIEWAGRISEEYFAQTDEEKRQGLPVVMPVFDRNTCSIPKSQISFIDYFITDMFDAWDAFAHLPALMQHLADNYKHWKTLDDLKCKSLRLPSDS.

2 disordered regions span residues arginine 18–proline 41 and threonine 72–arginine 95. Residues serine 23–glutamine 34 show a composition bias toward polar residues. Low complexity predominate over residues glycine 75–serine 90. One can recognise a PAS domain in the interval alanine 267–glycine 338. The disordered stretch occupies residues isoleucine 393–arginine 436. Residues serine 422–arginine 436 show a composition bias toward polar residues. Position 517 is a phosphoserine (serine 517). Residues threonine 539–lysine 875 form the PDEase domain. Catalysis depends on histidine 615, which acts as the Proton donor. 3 residues coordinate a divalent metal cation: histidine 619, histidine 655, and aspartate 656. A Phosphoserine modification is found at serine 754. Aspartate 781 contacts a divalent metal cation.

This sequence belongs to the cyclic nucleotide phosphodiesterase family. PDE8 subfamily. It depends on a divalent metal cation as a cofactor. As to expression, abundantly expressed in the thyroid. Also very weakly expressed in brain, spinal cord and placenta. In the thyroid isoform 1 predominates, and isoforms 2 and 6 are also highly expressed. In the placenta isoforms 1 and 2 are expressed equally. In the brain isoform 2 predominates.

It catalyses the reaction 3',5'-cyclic AMP + H2O = AMP + H(+). The protein operates within purine metabolism; 3',5'-cyclic AMP degradation; AMP from 3',5'-cyclic AMP: step 1/1. With respect to regulation, inhibited by dipyridimole. Insensitive to selective PDE inhibitors including rolipram and milrinone as well as to the non-selective inhibitor, IBMX. Unaffected by cGMP. Functionally, hydrolyzes the second messenger cAMP, which is a key regulator of many important physiological processes. May be involved in specific signaling in the thyroid gland. In Homo sapiens (Human), this protein is High affinity cAMP-specific and IBMX-insensitive 3',5'-cyclic phosphodiesterase 8B (PDE8B).